The chain runs to 42 residues: Ostricacin-4 (42 aa).

Intrachain disulfides connect C8–C36, C15–C30, and C20–C37.

Its subcellular location is the secreted. Functionally, has antibacterial activity against the Gram-positive bacterium S.aureus 1056 MRSA (MIC=11.48 ug/ml) and the Gram-negative bacterium E.coli O157:H7 (MIC=12.03 ug/ml). Does not have antifungal activity against the yeast C.albicans 3153A. This chain is Ostricacin-4, found in Struthio camelus (Common ostrich).